The sequence spans 59 residues: Potassium channel toxin alpha-KTx 16.4 (59 aa).

An N-terminal signal peptide occupies residues M1 to A22. 3 disulfide bridges follow: C30–C51, C36–C56, and C40–C58.

The protein belongs to the short scorpion toxin superfamily. Potassium channel inhibitor family. Alpha-KTx 16 subfamily. In terms of tissue distribution, expressed by the venom gland.

It is found in the secreted. Functionally, weak inhibitor of voltage-gated potassium channel hKv1.3/KCNA3. This is Potassium channel toxin alpha-KTx 16.4 from Mesobuthus eupeus (Lesser Asian scorpion).